Here is a 232-residue protein sequence, read N- to C-terminus: Ribonuclease 3 (232 aa).

The RNase III domain maps to 6-133 (FNDIENRLGV…VIAAVYLDKG (128 aa)). Glu-46 contributes to the Mg(2+) binding site. The active site involves Asp-50. 2 residues coordinate Mg(2+): Asp-119 and Glu-122. Glu-122 is an active-site residue. In terms of domain architecture, DRBM spans 160–229 (DFKTKLQELL…AKEALKRLEK (70 aa)).

The protein belongs to the ribonuclease III family. Homodimer. Requires Mg(2+) as cofactor.

It is found in the cytoplasm. It catalyses the reaction Endonucleolytic cleavage to 5'-phosphomonoester.. Its function is as follows. Digests double-stranded RNA. Involved in the processing of primary rRNA transcript to yield the immediate precursors to the large and small rRNAs (23S and 16S). Processes some mRNAs, and tRNAs when they are encoded in the rRNA operon. Processes pre-crRNA and tracrRNA of type II CRISPR loci if present in the organism. The chain is Ribonuclease 3 from Clostridium botulinum (strain Eklund 17B / Type B).